A 327-amino-acid polypeptide reads, in one-letter code: Fructose-1,6-bisphosphatase class 1 (327 aa).

Glu-84, Asp-103, Leu-105, and Asp-106 together coordinate Mg(2+). Residues 106-109, Asn-198, and Lys-264 each bind substrate; that span reads DGSS. Residue Glu-270 coordinates Mg(2+).

It belongs to the FBPase class 1 family. In terms of assembly, homotetramer. The cofactor is Mg(2+).

The protein localises to the cytoplasm. It carries out the reaction beta-D-fructose 1,6-bisphosphate + H2O = beta-D-fructose 6-phosphate + phosphate. It functions in the pathway carbohydrate biosynthesis; gluconeogenesis. This Psychrobacter cryohalolentis (strain ATCC BAA-1226 / DSM 17306 / VKM B-2378 / K5) protein is Fructose-1,6-bisphosphatase class 1.